Consider the following 143-residue polypeptide: MAIERTFSIIKPNAVAKNVIGNIFARFEAAGFKIVGTKMLHLTVEQARGFYAEHDGKPFFDGLVEFMTSGPIVVSVLEGENAVQRHRDLLGATNPANALAGTLRADYADSLTENGTHGSDSVESAAREIAYFFGEGEVCPRTR.

Residues Lys-11, Phe-59, Arg-87, Thr-93, Arg-104, and Asn-114 each coordinate ATP. His-117 acts as the Pros-phosphohistidine intermediate in catalysis.

Belongs to the NDK family. As to quaternary structure, homotetramer. Requires Mg(2+) as cofactor.

It localises to the cytoplasm. It carries out the reaction a 2'-deoxyribonucleoside 5'-diphosphate + ATP = a 2'-deoxyribonucleoside 5'-triphosphate + ADP. The catalysed reaction is a ribonucleoside 5'-diphosphate + ATP = a ribonucleoside 5'-triphosphate + ADP. Functionally, major role in the synthesis of nucleoside triphosphates other than ATP. The ATP gamma phosphate is transferred to the NDP beta phosphate via a ping-pong mechanism, using a phosphorylated active-site intermediate. This Shigella boydii serotype 4 (strain Sb227) protein is Nucleoside diphosphate kinase.